Here is a 75-residue protein sequence, read N- to C-terminus: uncharacterized protein (75 aa).

The helical transmembrane segment at 44 to 64 threads the bilayer; it reads IINMIVIWAALIALFVKLYIL.

It localises to the host membrane. This is an uncharacterized protein from Ostreid herpesvirus 1 (isolate France) (OsHV-1).